The sequence spans 193 residues: Peptidyl-tRNA hydrolase (193 aa).

Position 17 (tyrosine 17) interacts with tRNA. The active-site Proton acceptor is histidine 22. TRNA-binding residues include phenylalanine 68, asparagine 70, and asparagine 115.

It belongs to the PTH family. In terms of assembly, monomer.

Its subcellular location is the cytoplasm. The enzyme catalyses an N-acyl-L-alpha-aminoacyl-tRNA + H2O = an N-acyl-L-amino acid + a tRNA + H(+). Functionally, hydrolyzes ribosome-free peptidyl-tRNAs (with 1 or more amino acids incorporated), which drop off the ribosome during protein synthesis, or as a result of ribosome stalling. Catalyzes the release of premature peptidyl moieties from peptidyl-tRNA molecules trapped in stalled 50S ribosomal subunits, and thus maintains levels of free tRNAs and 50S ribosomes. This Alteromonas mediterranea (strain DSM 17117 / CIP 110805 / LMG 28347 / Deep ecotype) protein is Peptidyl-tRNA hydrolase.